The sequence spans 82 residues: Small ribosomal subunit protein bS18 (82 aa).

The interval 1–24 is disordered; sequence MKRTNMKKARMEQSRRPKKNPLKA.

It belongs to the bacterial ribosomal protein bS18 family. Part of the 30S ribosomal subunit. Forms a tight heterodimer with protein bS6.

Its function is as follows. Binds as a heterodimer with protein bS6 to the central domain of the 16S rRNA, where it helps stabilize the platform of the 30S subunit. This is Small ribosomal subunit protein bS18 from Corynebacterium jeikeium (strain K411).